The following is a 1096-amino-acid chain: MSNFKFYDPLSELMSGQLGGGSITGDMTVVAPSKISQSEPPTDPTDLVNKQYVDDAISNGAFLPLVGGTLLGKVYQPMDPSAPTELVNKKYVDSVATGGGPVDVYLPLAGGTLTGPAKYASPPTTDDQLVNKQYVDGQVTALGSGPFLPLTGGALTGQVVQPSAPVAANNLVNKQYVDDTITTQISTVTSNQNSTFLPLAGGTVTGPINYASPPTANEQLANKQYVDGQVTALGSGPFLPLAGGTVTGPIVQTAPATAQNHLVTKDYVDGVATVSDATTAAKGVVQLAGDLSGVAAAPTIAAGVVTNAKLANLTGPSHLKGSNETSAAATDISLGPNLTIGGGGVLDVDSSKIPTIPVQVAQGGTGATTLTGYVKGNGTSPLTTVAKIPVQDVNGSVLTVNGSAPDANGNVATALSNVLTGLDANRPTVIPASGTMYVVSGDDPTVNGKSYISNGTNWLTINTASTSNDTRYVLKGGDTMGGDLSFPSTTKLTLDAAPVNATDAVNKQYVDTQMAGATVANATTTAPGIVQLAGDLSGTATVPKIANAVVSNQKLTPGTSGTLKGTDTTGAVADVTLGSGLTISGTTLSVDAASVPKAGSSQFGTVQFNATSGDLEPSGANSGIALVKSGAINNVKLANFSGPSRLKGSSSLSSTPDDISLGTGLTMTGTVLSVDQSTLTNVLPLSGGTMTGPIVQPADPTSDTQLANKKYVDTAIGSVGATKYLALTGGAVTGTIQSPAPTAASDLTNKEYVDNKVTALGSGPFLPLSGGVVTGVVSQAALPTANEDLANKQYVDQKVATVSGGTAASPATTTSLGTIQLGGDLAGVGSEASAPVITSAAITNNKLKPGGSGTLKGTDTAGAISDVILGPSMSMTNGNQLNAAISVLSGSNPNVTAPTDRPSTANVLYLGTDGGVWVWNGTSYVSPTGSSFKFIKSTTKYTIPLTTAPSTSLQLTDYNIAVLPGQTCRASYMIRYQTGDASYGVSFGFSGPVAGDFFFGHSYMLTTNPGIATSINAVSWAITNMTSLLGVTDTSTPSSNLGTTDDNQYATAMITVEFTNNGTASKTLVVLFNRDLSNYPNVTQRVVGGSVEYRMY.

The protein belongs to the IIV-6 261R/396L/443R family.

This is an uncharacterized protein from Invertebrate iridescent virus 3 (IIV-3).